Consider the following 238-residue polypeptide: Pyridoxine 5'-phosphate synthase (238 aa).

Asn-9 is a binding site for 3-amino-2-oxopropyl phosphate. 11–12 (DH) contacts 1-deoxy-D-xylulose 5-phosphate. 3-amino-2-oxopropyl phosphate is bound at residue Arg-20. His-45 functions as the Proton acceptor in the catalytic mechanism. The 1-deoxy-D-xylulose 5-phosphate site is built by Arg-47 and His-52. Glu-72 acts as the Proton acceptor in catalysis. Residue Thr-102 participates in 1-deoxy-D-xylulose 5-phosphate binding. The Proton donor role is filled by His-189. Residues Gly-190 and 211-212 (GH) contribute to the 3-amino-2-oxopropyl phosphate site.

The protein belongs to the PNP synthase family. As to quaternary structure, homooctamer; tetramer of dimers.

It is found in the cytoplasm. It carries out the reaction 3-amino-2-oxopropyl phosphate + 1-deoxy-D-xylulose 5-phosphate = pyridoxine 5'-phosphate + phosphate + 2 H2O + H(+). It functions in the pathway cofactor biosynthesis; pyridoxine 5'-phosphate biosynthesis; pyridoxine 5'-phosphate from D-erythrose 4-phosphate: step 5/5. Catalyzes the complicated ring closure reaction between the two acyclic compounds 1-deoxy-D-xylulose-5-phosphate (DXP) and 3-amino-2-oxopropyl phosphate (1-amino-acetone-3-phosphate or AAP) to form pyridoxine 5'-phosphate (PNP) and inorganic phosphate. The polypeptide is Pyridoxine 5'-phosphate synthase (Ehrlichia canis (strain Jake)).